A 196-amino-acid chain; its full sequence is FMN-dependent NADH:quinone oxidoreductase (196 aa).

Residues Ser10 and 17-19 each bind FMN; that span reads SYS.

It belongs to the azoreductase type 1 family. Homodimer. FMN serves as cofactor.

The catalysed reaction is 2 a quinone + NADH + H(+) = 2 a 1,4-benzosemiquinone + NAD(+). The enzyme catalyses N,N-dimethyl-1,4-phenylenediamine + anthranilate + 2 NAD(+) = 2-(4-dimethylaminophenyl)diazenylbenzoate + 2 NADH + 2 H(+). Functionally, quinone reductase that provides resistance to thiol-specific stress caused by electrophilic quinones. Its function is as follows. Also exhibits azoreductase activity. Catalyzes the reductive cleavage of the azo bond in aromatic azo compounds to the corresponding amines. In Metamycoplasma arthritidis (strain 158L3-1) (Mycoplasma arthritidis), this protein is FMN-dependent NADH:quinone oxidoreductase.